The chain runs to 106 residues: UPF0145 protein Dhaf_3855 (106 aa).

This sequence belongs to the UPF0145 family.

In Desulfitobacterium hafniense (strain DSM 10664 / DCB-2), this protein is UPF0145 protein Dhaf_3855.